The chain runs to 98 residues: MDARDIILRPVITEKSADLMDSKKYTFDVALTATKLQVRDAIEEIFDVKVKSVNIMNVRGKEKRVGRYTGKIARRRKAIVALTEDSNDIKIFKDENNE.

Belongs to the universal ribosomal protein uL23 family. As to quaternary structure, part of the 50S ribosomal subunit. Contacts protein L29, and trigger factor when it is bound to the ribosome.

In terms of biological role, one of the early assembly proteins it binds 23S rRNA. One of the proteins that surrounds the polypeptide exit tunnel on the outside of the ribosome. Forms the main docking site for trigger factor binding to the ribosome. This chain is Large ribosomal subunit protein uL23, found in Lactobacillus delbrueckii subsp. bulgaricus (strain ATCC 11842 / DSM 20081 / BCRC 10696 / JCM 1002 / NBRC 13953 / NCIMB 11778 / NCTC 12712 / WDCM 00102 / Lb 14).